We begin with the raw amino-acid sequence, 770 residues long: Proton-coupled zinc antiporter SLC30A5 (770 aa).

Topologically, residues 1–29 (MEEKYSSQALAGGGVLGPVDVPSARLTRY) are cytoplasmic. The helical transmembrane segment at 30–50 (IVLLCFAKFLKAVGLFESYDL) threads the bilayer. Residues 51-53 (LKA) are Lumenal-facing. A helical transmembrane segment spans residues 54 to 74 (VHLVQFIFIVKLGSAFFMVLF). Residues 75 to 95 (QKPFSSGKVVTKHQWIKIFKH) are Cytoplasmic-facing. Residues 96–116 (AVVGCIISLLWFFGLTLCGPL) traverse the membrane as a helical segment. A topological domain (lumenal) is located at residue R117. Residues 118-138 (TLLLFEHSDVVVLSLLSVLFT) traverse the membrane as a helical segment. Residues 139–149 (SSGGGPAKTRG) are Cytoplasmic-facing. A helical membrane pass occupies residues 150 to 170 (AAFFIIAVICLLLFDNDDLMA). The Lumenal segment spans residues 171–190 (KIAEHPEGHHDSALTHVLYT). Residues 191–211 (VIAFLGVADHKGGVLLLVLAL) traverse the membrane as a helical segment. Over 212–235 (CCKVGFHMASRKLSVDVGGAKRLQ) the chain is Cytoplasmic. Residues 236–256 (ALSHLVSVLLLCPWVIVLSLT) traverse the membrane as a helical segment. Over 257–264 (TESKVESW) the chain is Lumenal. Residues 265-285 (SSLIMPFITVIFFVVILDFYV) form a helical membrane-spanning segment. At 286–300 (ESICSVKMESSKCAR) the chain is on the cytoplasmic side. Residues 301–321 (YGSFLIFISALLFGNFWTHPI) traverse the membrane as a helical segment. The Lumenal segment spans residues 322 to 339 (TDQLRAMNKPAHHESTEH). A helical transmembrane segment spans residues 340-360 (VLSGGVVVSAVFFILSANILS). Topologically, residues 361–415 (SPSRKGQKGTLIGYSPEGTPLYNFMGDAIQQSSQSLPRFIKESLKQILEEYDSRQ) are cytoplasmic. The helical transmembrane segment at 416-436 (IFYFLCLNLAFTFVELFYGVW) threads the bilayer. The Lumenal portion of the chain corresponds to 437-445 (TNSLGLISD). Residues 446–466 (GFHMLFDCSALVMGLFAALMT) form a helical membrane-spanning segment. H448 and D452 together coordinate Zn(2+). The Cytoplasmic segment spans residues 467-480 (RWKATRIFSYGYGR). A helical membrane pass occupies residues 481–501 (VEILSGFINGLFLMVIAFFVF). The Lumenal portion of the chain corresponds to 502–517 (MESVARLVDPPDIDTN). Residues 518 to 538 (MLTPVSVGGLIVNLVGICAFS) form a helical membrane-spanning segment. The segment at 539–579 (HAHSHGASRGGCHSHEHSHSYHGHSHSHGHGHSHNDHGHSH) is his-rich loop; required for zinc transport. Residues 539-597 (HAHSHGASRGGCHSHEHSHSYHGHSHSHGHGHSHNDHGHSHGHSHVSSGGGMNTNMRGV) lie on the Cytoplasmic side of the membrane. The interval 548-586 (GGCHSHEHSHSYHGHSHSHGHGHSHNDHGHSHGHSHVSS) is disordered. Positions 558-570 (SYHGHSHSHGHGH) are enriched in basic residues. A helical transmembrane segment spans residues 598–618 (FLHVLADTLGSVGVIVSTTFI). H600 and D604 together coordinate Zn(2+). At 619–622 (QQFG) the chain is on the lumenal side. The chain crosses the membrane as a helical span at residues 623–643 (WLIADPLCSLFIATLIFLSVI). The Cytoplasmic segment spans residues 644–770 (PLLKDACQVL…KYYKDGTYIM (127 aa)).

The protein belongs to the cation diffusion facilitator (CDF) transporter (TC 2.A.4) family. SLC30A subfamily. In terms of assembly, heterodimer with SLC30A6/ZNT6; form a functional zinc ion transmembrane transporter.

The protein localises to the golgi apparatus. It is found in the golgi stack membrane. It localises to the cytoplasmic vesicle. Its subcellular location is the COPII-coated vesicle membrane. The protein resides in the secretory vesicle membrane. The protein localises to the trans-Golgi network membrane. The enzyme catalyses Zn(2+)(in) + 2 H(+)(out) = Zn(2+)(out) + 2 H(+)(in). Together with SLC30A6 forms a functional proton-coupled zinc ion antiporter mediating zinc entry into the lumen of organelles along the secretory pathway. By contributing to zinc ion homeostasis within the early secretory pathway, regulates the activation and folding of enzymes like alkaline phosphatases and enzymes involved in phosphatidylinositol glycan anchor biosynthesis. The protein is Proton-coupled zinc antiporter SLC30A5 of Gallus gallus (Chicken).